Reading from the N-terminus, the 853-residue chain is Leucine--tRNA ligase (853 aa).

The short motif at 42–52 is the 'HIGH' region element; that stretch reads PYPSGNLHMGH. A 'KMSKS' region motif is present at residues 615-619; the sequence is KMSKS. Residue K618 participates in ATP binding.

This sequence belongs to the class-I aminoacyl-tRNA synthetase family.

It is found in the cytoplasm. The catalysed reaction is tRNA(Leu) + L-leucine + ATP = L-leucyl-tRNA(Leu) + AMP + diphosphate. The sequence is that of Leucine--tRNA ligase from Crocosphaera subtropica (strain ATCC 51142 / BH68) (Cyanothece sp. (strain ATCC 51142)).